The primary structure comprises 328 residues: MIRVAIDLMGGDRAPGEILEGARLFSRKDCKLFLVGTKEALANATGFEKVEVSDFLPMDVKPTEILRRKTSSMYIGLKLLKEGAVDVFISAGNTGALLAGATFILGRIHGVERPALAVPVPSLNGFTVLIDAGANVRSRPEHLVDFAVMGLSYAKVLGREKPSIGLLNVGEEETKGDETTRETYELLKRYFPDFFIGNVEGHDLNTGKADVVVTEGFSGNVAMKTMEGTAKMILDTLKSEVKKAGFVQKIGALLMKKVFSSLKKALDPRSYGGAFILGVNGLVVKAHGSSDRLAIQNALEVARVGAEMKIVESIEGEIKRVRDSGADR.

The protein belongs to the PlsX family. Homodimer. Probably interacts with PlsY.

Its subcellular location is the cytoplasm. The catalysed reaction is a fatty acyl-[ACP] + phosphate = an acyl phosphate + holo-[ACP]. It functions in the pathway lipid metabolism; phospholipid metabolism. Catalyzes the reversible formation of acyl-phosphate (acyl-PO(4)) from acyl-[acyl-carrier-protein] (acyl-ACP). This enzyme utilizes acyl-ACP as fatty acyl donor, but not acyl-CoA. This Pseudothermotoga lettingae (strain ATCC BAA-301 / DSM 14385 / NBRC 107922 / TMO) (Thermotoga lettingae) protein is Phosphate acyltransferase.